The following is a 408-amino-acid chain: Putative agmatinase 3 (408 aa).

An N-terminal signal peptide occupies residues 1–21 (MKSVEWFTWGVFLLLSGFGEA). Mn(2+) contacts are provided by histidine 198, aspartate 222, histidine 224, aspartate 226, aspartate 319, and aspartate 321.

Belongs to the arginase family. It depends on Mn(2+) as a cofactor.

It carries out the reaction agmatine + H2O = urea + putrescine. This Schizosaccharomyces pombe (strain 972 / ATCC 24843) (Fission yeast) protein is Putative agmatinase 3.